A 413-amino-acid chain; its full sequence is Serine/threonine transporter SstT (413 aa).

Helical transmembrane passes span 11–31, 43–63, 82–102, 141–161, 192–212, 216–236, 298–318, 339–359, and 363–383; these read IANGSLVLQIISGIILGVILA, FLGSLFVGALKAIAPILVFVL, IIGLYLLGTFVAALTAVLFSF, ALLTGNYIGILVWGAGLGITM, IGIFGLVAATFAETGFDALAG, LLMVLVGSMLFIALVINPIIV, MGGAAITITVLTLAAAHTLGI, ASGVAGGSLLLIPLACSLFGI, and VAMQVVAVGFIIGVIQDSAET.

Belongs to the dicarboxylate/amino acid:cation symporter (DAACS) (TC 2.A.23) family.

It is found in the cell inner membrane. It catalyses the reaction L-serine(in) + Na(+)(in) = L-serine(out) + Na(+)(out). The enzyme catalyses L-threonine(in) + Na(+)(in) = L-threonine(out) + Na(+)(out). Functionally, involved in the import of serine and threonine into the cell, with the concomitant import of sodium (symport system). This Shewanella frigidimarina (strain NCIMB 400) protein is Serine/threonine transporter SstT.